The following is a 247-amino-acid chain: UPF0246 protein LCABL_22600 (247 aa).

This sequence belongs to the UPF0246 family.

This Lacticaseibacillus casei (strain BL23) (Lactobacillus casei) protein is UPF0246 protein LCABL_22600.